The chain runs to 860 residues: DNA mismatch repair protein MutS (860 aa).

606-613 is an ATP binding site; that stretch reads GPNMSGKS.

The protein belongs to the DNA mismatch repair MutS family.

Functionally, this protein is involved in the repair of mismatches in DNA. It is possible that it carries out the mismatch recognition step. This protein has a weak ATPase activity. This Geobacillus sp. (strain WCH70) protein is DNA mismatch repair protein MutS.